A 776-amino-acid chain; its full sequence is G protein-regulated inducer of neurite outgrowth 3 (776 aa).

2 disordered regions span residues 1–37 and 68–312; these read MGTV…RHRP and VCEH…IKEV. The segment covering 101–118 has biased composition (low complexity); sequence QLPGSSQPAASAPSSAAG. Composition is skewed to polar residues over residues 129–161 and 193–203; these read PANQ…SQRT and ETIQGTVQTPV. Residues 208-217 are compositionally biased toward low complexity; that stretch reads VVSHSSSPVG. A compositionally biased stretch (polar residues) spans 242–274; it reads SGCSENKQPSVTASGPQGTTSVTPQPTPLTSEP. Residues S332 and S365 each carry the phosphoserine modification. Disordered regions lie at residues 518-637 and 723-748; these read ISKA…RPSR and LIKT…LRGR. Basic and acidic residues predominate over residues 520-552; it reads KADHSGSLDPTNKGDAREKKPASPQVVKEKEST. A compositionally biased stretch (polar residues) spans 566–580; it reads PKSQESGGTESAANP. Low complexity predominate over residues 604–620; sequence SLSLPSDPMGDSSPGSG. Residues 725 to 742 are compositionally biased toward polar residues; the sequence is KTQNSQTRRSISSDTSSN.

Its function is as follows. May be involved in neurite outgrowth. This chain is G protein-regulated inducer of neurite outgrowth 3 (GPRIN3), found in Homo sapiens (Human).